A 292-amino-acid polypeptide reads, in one-letter code: Ribosomal protein L11 methyltransferase (292 aa).

Threonine 145, glycine 166, aspartate 188, and asparagine 229 together coordinate S-adenosyl-L-methionine.

The protein belongs to the methyltransferase superfamily. PrmA family.

The protein resides in the cytoplasm. It catalyses the reaction L-lysyl-[protein] + 3 S-adenosyl-L-methionine = N(6),N(6),N(6)-trimethyl-L-lysyl-[protein] + 3 S-adenosyl-L-homocysteine + 3 H(+). In terms of biological role, methylates ribosomal protein L11. The protein is Ribosomal protein L11 methyltransferase of Nitrosococcus oceani (strain ATCC 19707 / BCRC 17464 / JCM 30415 / NCIMB 11848 / C-107).